A 452-amino-acid chain; its full sequence is Minor capsid protein (452 aa).

Basic and acidic residues-rich tracts occupy residues 219-236 (VDKP…KGKQ) and 247-258 (GKPDISKPGEKQ). The segment at 219-258 (VDKPEDKPKPVFDDKGKQPTDTVPPVDNGKPDISKPGEKQ) is disordered.

It belongs to the closteroviridae minor capsid protein family.

Its subcellular location is the virion. Functionally, minor capsid protein that encapsidates the 5'-terminal portion of the viral genome. In Lettuce infectious yellows virus (isolate United States/92) (LIYV), this protein is Minor capsid protein.